A 378-amino-acid polypeptide reads, in one-letter code: MRRHHLLGLLRRAAASSTSAASSRAGPHPSLHAPGPLRNGGSAPRFFSSRGGAGAASKGLGDDEVELYSLLLGVSIGDEGEASSRGPAASRGGRRGRNSKRQPPRSRFDGDGVGCSKDGKLSWGYSSFQGRRPSMEDRLSIKSTTVNGETVSLFGVFDGHGGPRAAEYLKKHLFKNLVKHPKFLKDTKLAINQTFLKTDADFLQSISSDRYRDDGSTAVAAILIGNRLYVANVGDSRAVALKAGKAVPLSEDHKPNKKDERKRIEDAGGIVVSDDIWRVDGILAVSRAFGNRLMKRYVKAEPNIQEKVVDEGLEYLVLATDGLWDVMRNEDAVSLLKAQDGPKAAAMKLTEVARSRLTLDNVTCIVLQFHHGKSTNSK.

2 disordered regions span residues 1–59 and 79–115; these read MRRH…ASKG and EGEASSRGPAASRGGRRGRNSKRQPPRSRFDGDGVGC. Over residues 7–26 the composition is skewed to low complexity; the sequence is LGLLRRAAASSTSAASSRAG. The segment covering 92-104 has biased composition (basic residues); sequence GGRRGRNSKRQPP. A PPM-type phosphatase domain is found at 122–369; the sequence is SWGYSSFQGR…DNVTCIVLQF (248 aa). The Mn(2+) site is built by aspartate 158, glycine 159, aspartate 321, and aspartate 360.

It belongs to the PP2C family. The cofactor is Mg(2+). Mn(2+) is required as a cofactor.

The enzyme catalyses O-phospho-L-seryl-[protein] + H2O = L-seryl-[protein] + phosphate. It carries out the reaction O-phospho-L-threonyl-[protein] + H2O = L-threonyl-[protein] + phosphate. The protein is Probable protein phosphatase 2C 55 of Oryza sativa subsp. japonica (Rice).